The primary structure comprises 93 residues: MLTVNEYFDGKVKSVAFQSSTLPATIGVISAGEYEFGTSEKETMTVVSGELTVLLPGQQDWQTFGAGESFEVAGQASFKAKTDADTAYLCTYG.

The protein belongs to the nucleoside phosphorylase PpnP family.

It catalyses the reaction a purine D-ribonucleoside + phosphate = a purine nucleobase + alpha-D-ribose 1-phosphate. It carries out the reaction adenosine + phosphate = alpha-D-ribose 1-phosphate + adenine. The enzyme catalyses cytidine + phosphate = cytosine + alpha-D-ribose 1-phosphate. The catalysed reaction is guanosine + phosphate = alpha-D-ribose 1-phosphate + guanine. It catalyses the reaction inosine + phosphate = alpha-D-ribose 1-phosphate + hypoxanthine. It carries out the reaction thymidine + phosphate = 2-deoxy-alpha-D-ribose 1-phosphate + thymine. The enzyme catalyses uridine + phosphate = alpha-D-ribose 1-phosphate + uracil. The catalysed reaction is xanthosine + phosphate = alpha-D-ribose 1-phosphate + xanthine. In terms of biological role, catalyzes the phosphorolysis of diverse nucleosides, yielding D-ribose 1-phosphate and the respective free bases. Can use uridine, adenosine, guanosine, cytidine, thymidine, inosine and xanthosine as substrates. Also catalyzes the reverse reactions. This chain is Pyrimidine/purine nucleoside phosphorylase, found in Marinobacter nauticus (strain ATCC 700491 / DSM 11845 / VT8) (Marinobacter aquaeolei).